Consider the following 174-residue polypeptide: Squamosa promoter-binding-like protein 4 (174 aa).

The tract at residues 1–42 is disordered; the sequence is MEGKRSQGQGYMKKKSYLVEEDMETDTDEEEEVGRDRVRGSR. Acidic residues predominate over residues 19 to 33; that stretch reads VEEDMETDTDEEEEV. Residues 51 to 128 form an SBP-type zinc finger; sequence LRLCQVDRCT…AGHNERRRKS (78 aa). Zn(2+) is bound by residues Cys-54, Cys-59, Cys-76, His-79, Cys-95, Cys-98, His-102, and Cys-114. The short motif at 111–127 is the Bipartite nuclear localization signal element; the sequence is KRSCRRRLAGHNERRRK. The segment covering 118–127 has biased composition (basic residues); that stretch reads LAGHNERRRK. 2 disordered regions span residues 118–148 and 155–174; these read LAGH…GQVV and SRVE…PQIR. Residues 163–174 are compositionally biased toward polar residues; the sequence is MPNSSFKRPQIR.

The cofactor is Zn(2+). In terms of tissue distribution, expressed in the rib meristem and inter-primordial tissue of the inflorescence apex.

The protein localises to the nucleus. Its subcellular location is the cytoplasm. In terms of biological role, trans-acting factor that binds specifically to the consensus nucleotide sequence 5'-TNCGTACAA-3' of AP1 promoter. Promotes both vegetative phase change and flowering. The polypeptide is Squamosa promoter-binding-like protein 4 (SPL4) (Arabidopsis thaliana (Mouse-ear cress)).